A 525-amino-acid polypeptide reads, in one-letter code: GMP synthase [glutamine-hydrolyzing] (525 aa).

The 199-residue stretch at 8 to 206 (PLLILDFGSQ…VVDICKAPTE (199 aa)) folds into the Glutamine amidotransferase type-1 domain. The active-site Nucleophile is the cysteine 85. Active-site residues include histidine 180 and glutamate 182. Residues 207–400 (WTPEHIIDEA…LGLPHDMVYR (194 aa)) enclose the GMPS ATP-PPase domain. An ATP-binding site is contributed by 234–240 (SGGVDSS).

As to quaternary structure, homodimer.

It carries out the reaction XMP + L-glutamine + ATP + H2O = GMP + L-glutamate + AMP + diphosphate + 2 H(+). It participates in purine metabolism; GMP biosynthesis; GMP from XMP (L-Gln route): step 1/1. Its function is as follows. Catalyzes the synthesis of GMP from XMP. This Legionella pneumophila (strain Corby) protein is GMP synthase [glutamine-hydrolyzing].